The chain runs to 141 residues: Endoribonuclease YbeY (141 aa).

Zn(2+) contacts are provided by histidine 105, histidine 109, and aspartate 115.

This sequence belongs to the endoribonuclease YbeY family. It depends on Zn(2+) as a cofactor.

The protein localises to the cytoplasm. Its function is as follows. Single strand-specific metallo-endoribonuclease involved in late-stage 70S ribosome quality control and in maturation of the 3' terminus of the 16S rRNA. This is Endoribonuclease YbeY from Chlorobaculum parvum (strain DSM 263 / NCIMB 8327) (Chlorobium vibrioforme subsp. thiosulfatophilum).